The chain runs to 203 residues: MKLLHVDGSILGPHSVSRTVSAAIVDRLRAQHPGLEVIYRDLAGTPLPHLSGAVLAGAQPNATNTPDVQHDVELGRQVLEEFLAADIVVIGAPLYNFTLSSQLKAWIDRILVAGVTFRYGPTGAEGLAGGKRVIAVVSRGGLYGPGTPAAAAEHAETYLRTVLAFIGITAPEIIVAEGIALGAEARERALAGALDAAAALKAA.

FMN is bound by residues serine 9, 15 to 17 (SVS), and 138 to 141 (SRGG).

The protein belongs to the azoreductase type 1 family. In terms of assembly, homodimer. The cofactor is FMN.

It catalyses the reaction 2 a quinone + NADH + H(+) = 2 a 1,4-benzosemiquinone + NAD(+). It carries out the reaction N,N-dimethyl-1,4-phenylenediamine + anthranilate + 2 NAD(+) = 2-(4-dimethylaminophenyl)diazenylbenzoate + 2 NADH + 2 H(+). Functionally, quinone reductase that provides resistance to thiol-specific stress caused by electrophilic quinones. In terms of biological role, also exhibits azoreductase activity. Catalyzes the reductive cleavage of the azo bond in aromatic azo compounds to the corresponding amines. The protein is FMN-dependent NADH:quinone oxidoreductase of Methylorubrum extorquens (strain CM4 / NCIMB 13688) (Methylobacterium extorquens).